We begin with the raw amino-acid sequence, 694 residues long: Polyphosphate kinase (694 aa).

ATP is bound at residue asparagine 45. Residues arginine 367 and arginine 397 each contribute to the Mg(2+) site. The active-site Phosphohistidine intermediate is histidine 427. The ATP site is built by tyrosine 460, arginine 553, and histidine 580.

It belongs to the polyphosphate kinase 1 (PPK1) family. The cofactor is Mg(2+). In terms of processing, an intermediate of this reaction is the autophosphorylated ppk in which a phosphate is covalently linked to a histidine residue through a N-P bond.

The catalysed reaction is [phosphate](n) + ATP = [phosphate](n+1) + ADP. Catalyzes the reversible transfer of the terminal phosphate of ATP to form a long-chain polyphosphate (polyP). The chain is Polyphosphate kinase from Campylobacter jejuni (strain RM1221).